Reading from the N-terminus, the 302-residue chain is Nudix hydrolase 5 (302 aa).

One can recognise a Nudix hydrolase domain in the interval 122 to 254; that stretch reads SHRIGIGAFV…EGNEMFKLIA (133 aa). A Nudix box motif is present at residues 159 to 180; the sequence is GTIKEGESIWAGAVREVKEETD. Mg(2+) contacts are provided by Glu174 and Glu178.

The protein belongs to the Nudix hydrolase family. The cofactor is Mg(2+). Mn(2+) serves as cofactor. Expressed in roots, stems and leaves.

Its function is as follows. Probably mediates the hydrolysis of some nucleoside diphosphate derivatives. This Arabidopsis thaliana (Mouse-ear cress) protein is Nudix hydrolase 5 (NUDT5).